The following is a 306-amino-acid chain: Serine/threonine-protein phosphatase PP2A-1 catalytic subunit (306 aa).

The Mn(2+) site is built by Asp54, His56, Asp82, and Asn114. His115 serves as the catalytic Proton donor. His164 and His238 together coordinate Mn(2+). A Leucine methyl ester modification is found at Leu306.

Belongs to the PPP phosphatase family. PP-2A subfamily. PP2A consists of a common heterodimeric core enzyme, composed of a 36 kDa catalytic subunit (subunit C) and a 65 kDa constant regulatory subunit (subunit A), that associates with a variety of regulatory subunits such as subunits B (the R2/B/PR55/B55, R3/B''/PR72/PR130/PR59 and R5/B'/B56 families). Interacts with TAF12B. Interacts with SRK2E/OST1. Interacts with TAP46. The cofactor is Mn(2+). Post-translationally, reversibly methyl esterified on Leu-306 by leucine carboxyl methyltransferase 1 (LCMT1) and pectin methylesterase 1 (PME1). Carboxyl methylation influences the affinity of the catalytic subunit for the different regulatory subunits, thereby modulating the PP2A holoenzyme's substrate specificity, enzyme activity and cellular localization. Phosphorylation of either threonine (by autophosphorylation-activated protein kinase) or tyrosine results in inactivation of the phosphatase. Auto-dephosphorylation has been suggested as a mechanism for reactivation.

It is found in the cytoplasm. It carries out the reaction O-phospho-L-seryl-[protein] + H2O = L-seryl-[protein] + phosphate. The catalysed reaction is O-phospho-L-threonyl-[protein] + H2O = L-threonyl-[protein] + phosphate. The chain is Serine/threonine-protein phosphatase PP2A-1 catalytic subunit from Arabidopsis thaliana (Mouse-ear cress).